A 308-amino-acid polypeptide reads, in one-letter code: Regulating synaptic membrane exocytosis protein 3 (308 aa).

The interval 86–120 (STETGIAVEMRSRVTRQGSRESTDGSTNSNSSDGT) is disordered. Residues 109 to 120 (DGSTNSNSSDGT) are compositionally biased toward low complexity. Residues 156–274 (PMGDVHIAIM…DLSAAVTGWY (119 aa)) enclose the C2 domain. 2 positions are modified to phosphoserine: serine 295 and serine 298.

Binds PPFIA3. Does not bind RAB3.

The protein localises to the synapse. In terms of biological role, regulates synaptic membrane exocytosis. This chain is Regulating synaptic membrane exocytosis protein 3 (RIMS3), found in Homo sapiens (Human).